A 262-amino-acid polypeptide reads, in one-letter code: Acetylglutamate kinase (262 aa).

Substrate is bound by residues Gly48–Gly49, Arg70, and Asn162.

It belongs to the acetylglutamate kinase family. ArgB subfamily.

The protein localises to the cytoplasm. It carries out the reaction N-acetyl-L-glutamate + ATP = N-acetyl-L-glutamyl 5-phosphate + ADP. It participates in amino-acid biosynthesis; L-arginine biosynthesis; N(2)-acetyl-L-ornithine from L-glutamate: step 2/4. Its function is as follows. Catalyzes the ATP-dependent phosphorylation of N-acetyl-L-glutamate. This Vibrio cholerae serotype O1 (strain ATCC 39541 / Classical Ogawa 395 / O395) protein is Acetylglutamate kinase.